The sequence spans 284 residues: MEMO1 family protein MmarC5_0191 (284 aa).

It belongs to the MEMO1 family.

The chain is MEMO1 family protein MmarC5_0191 from Methanococcus maripaludis (strain C5 / ATCC BAA-1333).